We begin with the raw amino-acid sequence, 495 residues long: Phytochrome A type 5 (495 aa).

Positions 1 to 21 (MSSSRPASSSSSRNRQSSQAR) are enriched in low complexity. Residues 1 to 24 (MSSSRPASSSSSRNRQSSQARVLA) are disordered. Positions 217-402 (SMEMLCNTVV…VFAVHVNREF (186 aa)) constitute a GAF domain. C322 contacts phytochromobilin.

This sequence belongs to the phytochrome family. Homodimer. In terms of processing, contains one covalently linked phytochromobilin chromophore.

Its function is as follows. Regulatory photoreceptor which exists in two forms that are reversibly interconvertible by light: the Pr form that absorbs maximally in the red region of the spectrum and the Pfr form that absorbs maximally in the far-red region. Photoconversion of Pr to Pfr induces an array of morphogenic responses, whereas reconversion of Pfr to Pr cancels the induction of those responses. Pfr controls the expression of a number of nuclear genes including those encoding the small subunit of ribulose-bisphosphate carboxylase, chlorophyll A/B binding protein, protochlorophyllide reductase, rRNA, etc. It also controls the expression of its own gene(s) in a negative feedback fashion. This chain is Phytochrome A type 5 (PHYA5), found in Avena sativa (Oat).